The primary structure comprises 644 residues: DNA mismatch repair protein MutL (644 aa).

Disordered regions lie at residues 338 to 390 (RPNA…ERPA) and 416 to 445 (QPQE…DDTQ). Low complexity-rich tracts occupy residues 349–366 (EATP…EASA) and 416–427 (QPQEAAEEAAGT).

It belongs to the DNA mismatch repair MutL/HexB family.

Functionally, this protein is involved in the repair of mismatches in DNA. It is required for dam-dependent methyl-directed DNA mismatch repair. May act as a 'molecular matchmaker', a protein that promotes the formation of a stable complex between two or more DNA-binding proteins in an ATP-dependent manner without itself being part of a final effector complex. The sequence is that of DNA mismatch repair protein MutL from Chromohalobacter salexigens (strain ATCC BAA-138 / DSM 3043 / CIP 106854 / NCIMB 13768 / 1H11).